The following is a 367-amino-acid chain: Probable dual-specificity RNA methyltransferase RlmN (367 aa).

The active-site Proton acceptor is glutamate 92. The Radical SAM core domain occupies 98 to 326; sequence QEYGLSVCVT…YDTLKKNGIN (229 aa). Cysteine 105 and cysteine 341 are oxidised to a cystine. 3 residues coordinate [4Fe-4S] cluster: cysteine 112, cysteine 116, and cysteine 119. S-adenosyl-L-methionine-binding positions include 164–165, serine 196, 219–221, and asparagine 297; these read GE and SLH. Cysteine 341 serves as the catalytic S-methylcysteine intermediate.

Belongs to the radical SAM superfamily. RlmN family. It depends on [4Fe-4S] cluster as a cofactor.

The protein localises to the cytoplasm. The catalysed reaction is adenosine(2503) in 23S rRNA + 2 reduced [2Fe-2S]-[ferredoxin] + 2 S-adenosyl-L-methionine = 2-methyladenosine(2503) in 23S rRNA + 5'-deoxyadenosine + L-methionine + 2 oxidized [2Fe-2S]-[ferredoxin] + S-adenosyl-L-homocysteine. It carries out the reaction adenosine(37) in tRNA + 2 reduced [2Fe-2S]-[ferredoxin] + 2 S-adenosyl-L-methionine = 2-methyladenosine(37) in tRNA + 5'-deoxyadenosine + L-methionine + 2 oxidized [2Fe-2S]-[ferredoxin] + S-adenosyl-L-homocysteine. In terms of biological role, specifically methylates position 2 of adenine 2503 in 23S rRNA and position 2 of adenine 37 in tRNAs. The sequence is that of Probable dual-specificity RNA methyltransferase RlmN from Listeria innocua serovar 6a (strain ATCC BAA-680 / CLIP 11262).